A 215-amino-acid chain; its full sequence is Large ribosomal subunit protein uL4 (215 aa).

The tract at residues 43-101 (HQRQGTSKTKERGEVRGSGRKLYRQKGTGNARVGDAQSPIRRGGGRAHGARPRDYAHDL) is disordered. Residues 50-59 (KTKERGEVRG) show a composition bias toward basic and acidic residues.

This sequence belongs to the universal ribosomal protein uL4 family. In terms of assembly, part of the 50S ribosomal subunit.

Functionally, one of the primary rRNA binding proteins, this protein initially binds near the 5'-end of the 23S rRNA. It is important during the early stages of 50S assembly. It makes multiple contacts with different domains of the 23S rRNA in the assembled 50S subunit and ribosome. Forms part of the polypeptide exit tunnel. The chain is Large ribosomal subunit protein uL4 from Salinibacter ruber (strain DSM 13855 / M31).